We begin with the raw amino-acid sequence, 291 residues long: G1/S-specific cyclin-D1 (291 aa).

Threonine 282 carries the post-translational modification Phosphothreonine.

Belongs to the cyclin family. Cyclin D subfamily. As to quaternary structure, interacts with the CDK4 and CDK6 protein kinases to form a serine/threonine kinase holoenzyme complex. The cyclin subunit imparts substrate specificity to the complex. In terms of processing, phosphorylation at Thr-282 by MAP kinases is required for ubiquitination and degradation by the DCX(AMBRA1) complex. Post-translationally, ubiquitinated by the DCX(AMBRA1) complex during the transition from G1 to S cell phase, leading to its degradation. The DCX(AMBRA1) complex represents the major regulator of CCND1 stability during the G1/S transition.

It is found in the nucleus. Its subcellular location is the cytoplasm. Its function is as follows. Regulatory component of the cyclin D1-CDK4 (DC) complex that phosphorylates and inhibits members of the retinoblastoma (RB) protein family including RB1 and regulates the cell-cycle during G(1)/S transition. Phosphorylation of RB1 allows dissociation of the transcription factor E2F from the RB/E2F complex and the subsequent transcription of E2F target genes which are responsible for the progression through the G(1) phase. Hypophosphorylates RB1 in early G(1) phase. Cyclin D-CDK4 complexes are major integrators of various mitogenenic and antimitogenic signals. This Danio rerio (Zebrafish) protein is G1/S-specific cyclin-D1 (ccnd1).